Reading from the N-terminus, the 697-residue chain is Phosphate acetyltransferase (697 aa).

Positions 366 to 697 (MFEHKLLEQA…QSPTEKASAQ (332 aa)) are phosphate acetyltransferase.

It in the N-terminal section; belongs to the CobB/CobQ family. In the C-terminal section; belongs to the phosphate acetyltransferase and butyryltransferase family. As to quaternary structure, homohexamer.

It is found in the cytoplasm. The catalysed reaction is acetyl-CoA + phosphate = acetyl phosphate + CoA. It participates in metabolic intermediate biosynthesis; acetyl-CoA biosynthesis; acetyl-CoA from acetate: step 2/2. Its function is as follows. Involved in acetate metabolism. This Streptomyces coelicolor (strain ATCC BAA-471 / A3(2) / M145) protein is Phosphate acetyltransferase (pta).